The primary structure comprises 186 residues: Putative 5'(3')-deoxyribonucleotidase (186 aa).

The active-site Nucleophile is aspartate 6. Residues aspartate 6, aspartate 8, and aspartate 137 each coordinate Mg(2+). Catalysis depends on aspartate 8, which acts as the Proton donor.

It belongs to the 5'(3')-deoxyribonucleotidase family. The cofactor is Mg(2+).

Dephosphorylates the 5' and 2'(3')-phosphates of deoxyribonucleotides. In Bordetella pertussis (strain Tohama I / ATCC BAA-589 / NCTC 13251), this protein is Putative 5'(3')-deoxyribonucleotidase.